A 432-amino-acid polypeptide reads, in one-letter code: Transcriptional adapter 3 (432 aa).

A coiled-coil region spans residues 40–69 (IEELDTLQLELETLLSSASRRLRVLEAETQ). Disordered regions lie at residues 88–127 (KEHELGTPIKHSKPKKQKLDGKGSHASGPGPGRPKSRNMQ) and 275–313 (SPVEDSPIPEISGKESGTDGASTSPRSQNKPFSAPHTKS). The span at 293–305 (DGASTSPRSQNKP) shows a compositional bias: polar residues. A coiled-coil region spans residues 367–407 (LLRLAKEEMNRQELRQRVRMADNEVMDAFRKIMAARQKKRT).

The protein belongs to the NGG1 family.

The protein resides in the nucleus. Its function is as follows. Functions as a component of the PCAF complex. The PCAF complex is capable of efficiently acetylating histones in a nucleosomal context. This Xenopus tropicalis (Western clawed frog) protein is Transcriptional adapter 3 (tada3).